A 384-amino-acid polypeptide reads, in one-letter code: Cytochrome b (384 aa).

4 consecutive transmembrane segments (helical) span residues 32-52 (VGSL…FLAM), 76-98 (WLIR…LHIG), 113-133 (LWVI…MGYC), and 179-199 (FFAL…MHLM). Residues His82 and His96 each contribute to the heme b site. Heme b is bound by residues His183 and His197. Residue His202 coordinates a ubiquinone. 4 helical membrane passes run 225–245 (FIFK…LFVF), 289–309 (LGGV…PYTD), 321–341 (LSKF…NLGQ), and 348–368 (YIEL…LIVP).

The protein belongs to the cytochrome b family. Fungal cytochrome b-c1 complex contains 10 subunits; 3 respiratory subunits, 2 core proteins and 5 low-molecular weight proteins. Cytochrome b-c1 complex is a homodimer. The cofactor is heme b.

The protein resides in the mitochondrion inner membrane. In terms of biological role, component of the ubiquinol-cytochrome c reductase complex (complex III or cytochrome b-c1 complex) that is part of the mitochondrial respiratory chain. The b-c1 complex mediates electron transfer from ubiquinol to cytochrome c. Contributes to the generation of a proton gradient across the mitochondrial membrane that is then used for ATP synthesis. This chain is Cytochrome b (COB), found in Candida parapsilosis (Yeast).